We begin with the raw amino-acid sequence, 235 residues long: Isoprenyl transferase (235 aa).

Aspartate 21 is an active-site residue. A Mg(2+)-binding site is contributed by aspartate 21. Substrate contacts are provided by residues 22–25, tryptophan 26, lysine 34, histidine 38, and 66–68; these read GNAR and SSE. Catalysis depends on asparagine 69, which acts as the Proton acceptor. Substrate is bound by residues tryptophan 70, arginine 72, arginine 183, and 189–191; that span reads RIS. Glutamate 202 provides a ligand contact to Mg(2+).

This sequence belongs to the UPP synthase family. Homodimer. Mg(2+) serves as cofactor.

Catalyzes the condensation of isopentenyl diphosphate (IPP) with allylic pyrophosphates generating different type of terpenoids. In Rickettsia felis (strain ATCC VR-1525 / URRWXCal2) (Rickettsia azadi), this protein is Isoprenyl transferase.